A 299-amino-acid polypeptide reads, in one-letter code: Putative S-adenosyl-L-methionine-dependent methyltransferase MAB_0027c (299 aa).

S-adenosyl-L-methionine is bound by residues D126 and 155 to 156 (DL).

Belongs to the UPF0677 family.

Its function is as follows. Exhibits S-adenosyl-L-methionine-dependent methyltransferase activity. This chain is Putative S-adenosyl-L-methionine-dependent methyltransferase MAB_0027c, found in Mycobacteroides abscessus (strain ATCC 19977 / DSM 44196 / CCUG 20993 / CIP 104536 / JCM 13569 / NCTC 13031 / TMC 1543 / L948) (Mycobacterium abscessus).